We begin with the raw amino-acid sequence, 163 residues long: Nucleotide-binding protein HD_0358 (163 aa).

This sequence belongs to the YajQ family.

Functionally, nucleotide-binding protein. The protein is Nucleotide-binding protein HD_0358 of Haemophilus ducreyi (strain 35000HP / ATCC 700724).